A 575-amino-acid polypeptide reads, in one-letter code: Dihydroxy-acid dehydratase (575 aa).

Positions 1 to 27 (MSNQERQERPEKDPDLRSTEVTEGYEK) are disordered. Residue C61 participates in [2Fe-2S] cluster binding. D93 is a binding site for Mg(2+). Position 134 (C134) interacts with [2Fe-2S] cluster. Positions 135 and 136 each coordinate Mg(2+). K136 carries the N6-carboxylysine modification. A [2Fe-2S] cluster-binding site is contributed by C206. E460 is a Mg(2+) binding site. The active-site Proton acceptor is the S486.

This sequence belongs to the IlvD/Edd family. Homodimer. [2Fe-2S] cluster serves as cofactor. Mg(2+) is required as a cofactor.

It catalyses the reaction (2R)-2,3-dihydroxy-3-methylbutanoate = 3-methyl-2-oxobutanoate + H2O. The catalysed reaction is (2R,3R)-2,3-dihydroxy-3-methylpentanoate = (S)-3-methyl-2-oxopentanoate + H2O. It functions in the pathway amino-acid biosynthesis; L-isoleucine biosynthesis; L-isoleucine from 2-oxobutanoate: step 3/4. It participates in amino-acid biosynthesis; L-valine biosynthesis; L-valine from pyruvate: step 3/4. Functions in the biosynthesis of branched-chain amino acids. Catalyzes the dehydration of (2R,3R)-2,3-dihydroxy-3-methylpentanoate (2,3-dihydroxy-3-methylvalerate) into 2-oxo-3-methylpentanoate (2-oxo-3-methylvalerate) and of (2R)-2,3-dihydroxy-3-methylbutanoate (2,3-dihydroxyisovalerate) into 2-oxo-3-methylbutanoate (2-oxoisovalerate), the penultimate precursor to L-isoleucine and L-valine, respectively. This is Dihydroxy-acid dehydratase from Haloarcula marismortui (strain ATCC 43049 / DSM 3752 / JCM 8966 / VKM B-1809) (Halobacterium marismortui).